A 946-amino-acid polypeptide reads, in one-letter code: Alanine--tRNA ligase, cytoplasmic (946 aa).

Positions 591, 595, 710, and 714 each coordinate Zn(2+).

This sequence belongs to the class-II aminoacyl-tRNA synthetase family. As to quaternary structure, monomer. Zn(2+) is required as a cofactor.

It localises to the cytoplasm. The enzyme catalyses tRNA(Ala) + L-alanine + ATP = L-alanyl-tRNA(Ala) + AMP + diphosphate. Functionally, catalyzes the attachment of alanine to tRNA(Ala) in a two-step reaction: alanine is first activated by ATP to form Ala-AMP and then transferred to the acceptor end of tRNA(Ala). Also edits incorrectly charged tRNA(Ala) via its editing domain. This is Alanine--tRNA ligase, cytoplasmic (alaS) from Dictyostelium discoideum (Social amoeba).